A 144-amino-acid chain; its full sequence is 3-hydroxyacyl-[acyl-carrier-protein] dehydratase FabZ (144 aa).

His-51 is a catalytic residue.

The protein belongs to the thioester dehydratase family. FabZ subfamily.

It localises to the cytoplasm. The catalysed reaction is a (3R)-hydroxyacyl-[ACP] = a (2E)-enoyl-[ACP] + H2O. In terms of biological role, involved in unsaturated fatty acids biosynthesis. Catalyzes the dehydration of short chain beta-hydroxyacyl-ACPs and long chain saturated and unsaturated beta-hydroxyacyl-ACPs. This is 3-hydroxyacyl-[acyl-carrier-protein] dehydratase FabZ from Lactococcus lactis subsp. cremoris (strain MG1363).